We begin with the raw amino-acid sequence, 265 residues long: 4-hydroxy-tetrahydrodipicolinate reductase (265 aa).

Residue 9–14 (GPRGRM) participates in NAD(+) binding. NADP(+) is bound at residue arginine 37. Residues 98 to 100 (GTT) and 124 to 127 (APNF) contribute to the NAD(+) site. Catalysis depends on histidine 154, which acts as the Proton donor/acceptor. A (S)-2,3,4,5-tetrahydrodipicolinate-binding site is contributed by histidine 155. Catalysis depends on lysine 158, which acts as the Proton donor. A (S)-2,3,4,5-tetrahydrodipicolinate-binding site is contributed by 164-165 (GT).

It belongs to the DapB family.

It is found in the cytoplasm. The catalysed reaction is (S)-2,3,4,5-tetrahydrodipicolinate + NAD(+) + H2O = (2S,4S)-4-hydroxy-2,3,4,5-tetrahydrodipicolinate + NADH + H(+). It catalyses the reaction (S)-2,3,4,5-tetrahydrodipicolinate + NADP(+) + H2O = (2S,4S)-4-hydroxy-2,3,4,5-tetrahydrodipicolinate + NADPH + H(+). It functions in the pathway amino-acid biosynthesis; L-lysine biosynthesis via DAP pathway; (S)-tetrahydrodipicolinate from L-aspartate: step 4/4. Functionally, catalyzes the conversion of 4-hydroxy-tetrahydrodipicolinate (HTPA) to tetrahydrodipicolinate. This chain is 4-hydroxy-tetrahydrodipicolinate reductase, found in Geobacillus thermodenitrificans (strain NG80-2).